A 264-amino-acid polypeptide reads, in one-letter code: Thymidylate synthase (264 aa).

A dUMP-binding site is contributed by Arg-21. His-51 lines the (6R)-5,10-methylene-5,6,7,8-tetrahydrofolate pocket. 126–127 is a binding site for dUMP; sequence RR. Cys-146 (nucleophile) is an active-site residue. DUMP is bound by residues 166–169, Asn-177, and 207–209; these read RSAD and HLY. Asp-169 provides a ligand contact to (6R)-5,10-methylene-5,6,7,8-tetrahydrofolate. Residue Ala-263 participates in (6R)-5,10-methylene-5,6,7,8-tetrahydrofolate binding.

It belongs to the thymidylate synthase family. Bacterial-type ThyA subfamily. As to quaternary structure, homodimer.

Its subcellular location is the cytoplasm. The enzyme catalyses dUMP + (6R)-5,10-methylene-5,6,7,8-tetrahydrofolate = 7,8-dihydrofolate + dTMP. It participates in pyrimidine metabolism; dTTP biosynthesis. In terms of biological role, catalyzes the reductive methylation of 2'-deoxyuridine-5'-monophosphate (dUMP) to 2'-deoxythymidine-5'-monophosphate (dTMP) while utilizing 5,10-methylenetetrahydrofolate (mTHF) as the methyl donor and reductant in the reaction, yielding dihydrofolate (DHF) as a by-product. This enzymatic reaction provides an intracellular de novo source of dTMP, an essential precursor for DNA biosynthesis. This chain is Thymidylate synthase, found in Paramagnetospirillum magneticum (strain ATCC 700264 / AMB-1) (Magnetospirillum magneticum).